A 339-amino-acid chain; its full sequence is MMTTEDFKKSTANLKKVVPLMMKHHVAATPVNYALWYTYVDQAIPQLNAEMDSVLKNFGLCPPASGEHLYQQYIATKAETNINQLRANVEVLLGEISSSMSDTLSDTSSFANVIDKSFKDLERVEQDNLSIEEVMTVIRRLVSDSKDIRHSTNFLNNQLNAATLEISRLKEQLAKVQKDALFDSLSGLYNRRAFDGDMFTLIHAGQQVSLIMLDIDHFKALNDNYGHLFGDQIIRAIAKRLQSLCRDGVTAYRYGGEEFALIAPHKSLRIARQFAESVRRSIEKLTVKDRRSGQSVGSITASFGVVEKIEGDSLESLIGRADGLLYEAKNLGRNRVMPL.

A GGDEF domain is found at Gln-206 to Leu-339. Asp-214 is a Mg(2+) binding site. Positions 222 and 231 each coordinate substrate. Glu-257 serves as a coordination point for Mg(2+). The active-site Proton acceptor is the Glu-257.

Mg(2+) is required as a cofactor.

The enzyme catalyses 2 GTP = 3',3'-c-di-GMP + 2 diphosphate. The protein operates within purine metabolism; 3',5'-cyclic di-GMP biosynthesis. Its function is as follows. Diguanylate cyclase (DGC) that catalyzes the synthesis of cyclic diguanylate (c-di-GMP) via the condensation of 2 GTP molecules. Is involved in the modulation of intracellular c-di-GMP levels. Cyclic-di-GMP is a second messenger which positively regulates biofilm formation and negatively regulates virulence in V.cholerae, and is proposed to play an important role in the transition from persistence in the environment to survival in the host. Overexpression of vdcA results in increased biofilm formation, and reduced motility and virulence. The sequence is that of Diguanylate cyclase VdcA (vdcA) from Vibrio cholerae serotype O1 (strain ATCC 39315 / El Tor Inaba N16961).